We begin with the raw amino-acid sequence, 460 residues long: Anthocyanidin 3-O-glucoside 5-O-glucosyltransferase 1 (460 aa).

The signal sequence occupies residues 1–22 (MVRRRVLLATFPAQGHINPALQ). Histidine 16 serves as the catalytic Proton acceptor. An an anthocyanidin-binding site is contributed by histidine 16. Residues glutamine 338, histidine 353, tryptophan 356, asparagine 357, serine 358, glutamate 361, aspartate 377, and glutamine 378 each contribute to the UDP-alpha-D-glucose site.

It belongs to the UDP-glycosyltransferase family.

The enzyme catalyses an anthocyanidin 3-O-beta-D-glucoside + UDP-alpha-D-glucose = an anthocyanidin 3,5-di-O-beta-D-glucoside + UDP + 2 H(+). It functions in the pathway pigment biosynthesis; anthocyanin biosynthesis. Its function is as follows. Catalyzes the glucosylation at the O-5 position of anthocyanidin 3-glucosides to form anthocyanidin 3,5-di-O-glucosides using UDP-glucose as sugar donor. Anthocyanidin 3,5-di-O-glucosides are molecules that are responsible for pigmentation. Also acts on anthocyanidin 3-O-(6-O-malonylglucoside). Much less active with hydroxycinnamoylglucose derivatives. No activity in the absence of the 3-O-glucoside group. The polypeptide is Anthocyanidin 3-O-glucoside 5-O-glucosyltransferase 1 (PF3R4) (Perilla frutescens (Beefsteak mint)).